We begin with the raw amino-acid sequence, 1024 residues long: Nardilysin-like (1024 aa).

Positions 41-103 are disordered; the sequence is PDIYPEGSVP…DEVKGKGDHQ (63 aa). The segment covering 52–95 has biased composition (acidic residues); sequence QIDEDDEDGEEEDSDGSSEDDDDDEDDEEDGEGDEEDEDEDEDE. Zn(2+) is bound at residue H129. E132 (proton acceptor) is an active-site residue. H133 is a Zn(2+) binding site. E203 is a catalytic residue. Residue E210 coordinates Zn(2+).

Belongs to the peptidase M16 family. The cofactor is Zn(2+).

It carries out the reaction Hydrolysis of polypeptides, preferably at -Xaa-|-Arg-Lys-, and less commonly at -Arg-|-Arg-Xaa-, in which Xaa is not Arg or Lys.. Its function is as follows. Cleaves peptide substrates on the N-terminus of arginine residues in dibasic pairs. This chain is Nardilysin-like, found in Arabidopsis thaliana (Mouse-ear cress).